The primary structure comprises 453 residues: MSPQTETKAGVGFKAGVKEYKLTYYTPEYETKDTDILAAFRVTPQPGVPPEERGAAVAAESSTGTWTTVWTDGLTSLDRYKGRCYHIEPVPGEEEQFIAYVAYPLDLFEEGSVTNMFTSIVGNVFGFKALRALRLEDLRIPVAYVKTFQGPPHGIQVERDKLNKYGRPLLGCTIKPKLGLSAKNYGRAVYECLRGGLDFTKDDENVNSQPFMRWRDRFLFCAEAIYKSQAETGEIKGHYLNATAGTCEEMIKRAVFARELGVPIVMHDYLTGGFTANTTLSHYCRDNGLLLHIHRAMHAVIDRQKNHGMHFRVLAKALRMSGGDHIHSGTVVGKLEGERDITLGFVDLLRDDYIEKDRSRGIYFTQDWVSLPGVIPVASRGIHVWHMPALTEIFGDDSVLQFGGGTLGHPWGNAPGAVANRVALEACVKARNEGRDLAAEGGEIIREACKWSP.

A propeptide spanning residues 1–2 is cleaved from the precursor; it reads MS. An N-acetylproline modification is found at proline 3. An N6,N6,N6-trimethyllysine modification is found at lysine 14. Residues asparagine 123 and threonine 173 each contribute to the substrate site. The Proton acceptor role is filled by lysine 175. Lysine 177 is a binding site for substrate. 3 residues coordinate Mg(2+): lysine 201, aspartate 203, and glutamate 204. Lysine 201 is subject to N6-carboxylysine. The active-site Proton acceptor is histidine 294. 3 residues coordinate substrate: arginine 295, histidine 327, and serine 379.

The protein belongs to the RuBisCO large chain family. Type I subfamily. In terms of assembly, heterohexadecamer of 8 large chains and 8 small chains; disulfide-linked. The disulfide link is formed within the large subunit homodimers. Requires Mg(2+) as cofactor. In terms of processing, the disulfide bond which can form in the large chain dimeric partners within the hexadecamer appears to be associated with oxidative stress and protein turnover.

It is found in the plastid. The protein resides in the chloroplast. The enzyme catalyses 2 (2R)-3-phosphoglycerate + 2 H(+) = D-ribulose 1,5-bisphosphate + CO2 + H2O. It carries out the reaction D-ribulose 1,5-bisphosphate + O2 = 2-phosphoglycolate + (2R)-3-phosphoglycerate + 2 H(+). RuBisCO catalyzes two reactions: the carboxylation of D-ribulose 1,5-bisphosphate, the primary event in carbon dioxide fixation, as well as the oxidative fragmentation of the pentose substrate in the photorespiration process. Both reactions occur simultaneously and in competition at the same active site. The polypeptide is Ribulose bisphosphate carboxylase large chain (Cruciata glabra (Slender crosswort)).